The chain runs to 526 residues: WRKY transcription factor 72A (526 aa).

Basic and acidic residues-rich tracts occupy residues 40–52 (KERK…DDNS) and 60–76 (LTGD…KADM). Disordered stretches follow at residues 40-76 (KERK…KADM) and 170-200 (SSTK…QTWP). A coiled-coil region spans residues 62-106 (GDKKDDQLESAKADMEEVMEENQRLKKHLDKIMKDYRNLQMQFHE). Residues 170–185 (SSTKSSPSNLSPENSL) show a composition bias toward low complexity. Positions 232-298 (CDTPTMNDGC…YEGTHNHPLP (67 aa)) form a DNA-binding region, WRKY.

It belongs to the WRKY group II-b family. As to expression, expressed in roots, trichomes and fruits.

It localises to the nucleus. Transcription activator involved in the transcriptional regulation of terpene biosynthesis in glandular trichomes. Binds to the promoter of the linalool synthase TPS5 and promotes TPS5 gene transactivation. In association with WRKY72B, contributes to basal defense against root-knot nematodes (RKNs) and potato aphids, as well as Mi-1-mediated gene-for-gene resistance to these pests. Both WRKY72A and WRKY72B are not required for gene-for-gene resistance mediated by Pto, another tomato R gene. This Solanum lycopersicum (Tomato) protein is WRKY transcription factor 72A.